A 178-amino-acid polypeptide reads, in one-letter code: Large ribosomal subunit protein uL6 (178 aa).

It belongs to the universal ribosomal protein uL6 family. Part of the 50S ribosomal subunit.

This protein binds to the 23S rRNA, and is important in its secondary structure. It is located near the subunit interface in the base of the L7/L12 stalk, and near the tRNA binding site of the peptidyltransferase center. The polypeptide is Large ribosomal subunit protein uL6 (Streptococcus pneumoniae (strain JJA)).